Here is a 2824-residue protein sequence, read N- to C-terminus: Highly reducing polyketide synthase stpks1 (2824 aa).

One can recognise a Ketosynthase family 3 (KS3) domain in the interval 8-428; it reads PKPVAVVGIS…GANGHVIAES (421 aa). Catalysis depends on for beta-ketoacyl synthase activity residues Cys177, His312, and His348. The interval 517–854 is malonyl-CoA:ACP transacylase (MAT) domain; the sequence is QLVFVFSGQG…LTAVGNLSTL (338 aa). Ser616 acts as the For malonyltransferase activity in catalysis. An N-terminal hotdog fold region spans residues 886–1004; sequence MPFYSESSEL…GFMTTEVMDK (119 aa). The 283-residue stretch at 886 to 1168 folds into the PKS/mFAS DH domain; sequence MPFYSESSEL…SKHWTGAVPT (283 aa). The tract at residues 894–1083 is dehydratase (DH) domain; sequence ELAVKMKRSR…PSLLDSCIHG (190 aa). His925 acts as the Proton acceptor; for dehydratase activity in catalysis. The C-terminal hotdog fold stretch occupies residues 1018 to 1168; it reads TTPADISNLY…SKHWTGAVPT (151 aa). Catalysis depends on Asp1078, which acts as the Proton donor; for dehydratase activity. The methyltransferase (CMet) domain stretch occupies residues 1101-1449; the sequence is PSHIGRVTLY…KFQVVDGAQD (349 aa). The interval 1213 to 1232 is disordered; sequence APPSANGHANGHANGSANGS. The enoyl reductase (ER) domain stretch occupies residues 1518 to 1840; it reads TGTFDGAVAT…LPSDFSVSQS (323 aa). Positions 1842 to 2096 are ketoreductase (KR) domain; sequence ALADDKTYLV…SESVLYNHLV (255 aa). A Carrier domain is found at 2109 to 2196; sequence DPYEVLQEIV…TAVSTAEKPF (88 aa). A thioesterase (TE) domain region spans residues 2200–2414; sequence AMHQPGQTIL…WASSDATTRM (215 aa). The methyltransferase (CMet) domain stretch occupies residues 2608 to 2809; that stretch reads YRQNKVFTSM…ATGYSNVQVC (202 aa).

Its pathway is mycotoxin biosynthesis. In terms of biological role, highly reducing polyketide synthase; part of the gene cluster that mediates the biosynthesis of strobilurin A, an antifungal polyketide that contains a key beta-methoxyacrylate toxophore that targets the complex III of the mitochondrial electron transport chain. Strobilurin biosynthesis begins with construction of benzoyl CoA by step-wise elimination of ammonia from phenylalanine by the phenylalanine ammonia-lyase str11, oxygenation by str8 and retro-Claisen reaction to form benzoic acid, which is activated to its CoA thiolester benzoyl CoA by the dedicated CoA ligase str10. Benzoyl CoA forms the starter unit for the highly reducing polyketide synthase stpks1 that produces the polyketide prestrobilutin A. The FAD-dependent oxygenase str9 then catalyzes the key oxidative rearrangement responsible for the creation of the beta-methoxyacrylate toxophore. Str9 performs epoxidation of the 2,3 olefin of prestrobilutin A, followed by Meinwald rearrangement to furnish the aldehyde intermediate. Rapid enolization of the aldehyde intermediate would give the beta-methoxyacrylate skeleton and methylations catalyzed by str2 and str3 complete the synthesis and lead to the production of strobilurin A. The short-chain dehydrogenase stl2 and the dehydrogenase str4 play a role in the shunt pathway leading to the production of bolineol. The cluster encodes no obvious halogenase gene that could be involved in production of strobilurin B, nor any obvious dimethylallyl-transferase that could be involved in the production of strobilurin G. It is possible that unknown proteins encoded in, or near, the cluster (such as str1 or stl1) may form new classes of halogenases or dimethylally-transferases, or that the responsible genes are located elsewhere on the genome. Similarly, proteins encoded by str5/str6 hydrolases appear to have no chemical role in the biosynthesis of strobilurin A. Finally, no obvious self-resistance gene is found within the cluster. This is Highly reducing polyketide synthase stpks1 from Strobilurus tenacellus.